The primary structure comprises 1300 residues: Zinc finger protein 536 (1300 aa).

Disordered regions lie at residues 1–26 and 47–77; these read MEEASLCLGVSSAEPEAEPHLSGPVL and FPELHPRPNPEEKPPASLEEKAHVPMSGQPM. The span at 48–69 shows a compositional bias: basic and acidic residues; it reads PELHPRPNPEEKPPASLEEKAH. 6 C2H2-type zinc fingers span residues 130–152, 158–180, 274–297, 300–323, 345–367, and 373–395; these read YPCPLCGKRFRFNSILSLHMRTH, FKCPYCDHRAAQKGNLKIHLRTH, FRCTFCKGKFKKREELDRHIRILH, YKCTLCDFAASQEEELISHVEKAH, FRCEVCGQVFSQAWFLKGHMRKH, and HCCQICGRRFKEPWFLKNHMKVH. Disordered regions lie at residues 584 to 604 and 650 to 739; these read HSTKVGSQRDLPSKLDPLESS and SRVH…QQPA. The segment covering 594-604 has biased composition (basic and acidic residues); the sequence is LPSKLDPLESS. The C2H2-type 7 zinc-finger motif lies at 631–653; it reads TECPDCGRVFRTYHQVVVHSRVH. Over residues 657–674 the composition is skewed to basic and acidic residues; the sequence is RKGEEDGLHVGLDERRGS. Positions 675–696 are enriched in polar residues; sequence GSDQESQSVSRSTTPGSSNVTE. 2 consecutive C2H2-type zinc fingers follow at residues 751–773 and 779–801; these read KDCPYCGKTFRTSHHLKVHLRIH and YKCPHCDYAGTQSASLKYHLERH. The disordered stretch occupies residues 802–826; that stretch reads HRERQNGAGPLSGQPPNQDHKDEMS. Phosphoserine is present on residues Ser-826 and Ser-827. A compositionally biased stretch (polar residues) spans 856–880; the sequence is SQQWTSGVLSSGDHSGQATGMSSEV. 3 disordered regions span residues 856 to 893, 937 to 985, and 1124 to 1260; these read SQQWTSGVLSSGDHSGQATGMSSEVPSDALKGTDLPSK, KDKA…PDAA, and SGAS…SLDK. 2 stretches are compositionally biased toward basic and acidic residues: residues 950–972 and 1133–1143; these read HGVDGGEEKPSGKSSQRKSEKSQ and KEPDGKAHSEE. 2 stretches are compositionally biased toward acidic residues: residues 1160–1170 and 1178–1187; these read DLSDIASSEDM and NDEEDVETEP. Over residues 1194–1209 the composition is skewed to low complexity; it reads LSALSKDSSSDGGDSL.

Belongs to the krueppel C2H2-type zinc-finger protein family.

Its subcellular location is the nucleus. Its function is as follows. Transcriptional repressor that negatively regulates neuron differentiation by repressing retinoic acid-induced gene transcription. Binds and interrupts RARA from binding to retinoic acid response elements (RARE) composed of tandem 5'-AGGTCA-3' sites known as DR1-DR5. Recognizes and binds 2 copies of the core DNA sequence 5'-CCCCCA-3'. This is Zinc finger protein 536 (ZNF536) from Homo sapiens (Human).